Consider the following 288-residue polypeptide: Bifunctional protein FolD (288 aa).

NADP(+) contacts are provided by residues 166 to 168 (GAS) and isoleucine 232.

This sequence belongs to the tetrahydrofolate dehydrogenase/cyclohydrolase family. In terms of assembly, homodimer.

It carries out the reaction (6R)-5,10-methylene-5,6,7,8-tetrahydrofolate + NADP(+) = (6R)-5,10-methenyltetrahydrofolate + NADPH. The enzyme catalyses (6R)-5,10-methenyltetrahydrofolate + H2O = (6R)-10-formyltetrahydrofolate + H(+). It participates in one-carbon metabolism; tetrahydrofolate interconversion. In terms of biological role, catalyzes the oxidation of 5,10-methylenetetrahydrofolate to 5,10-methenyltetrahydrofolate and then the hydrolysis of 5,10-methenyltetrahydrofolate to 10-formyltetrahydrofolate. The sequence is that of Bifunctional protein FolD from Erwinia tasmaniensis (strain DSM 17950 / CFBP 7177 / CIP 109463 / NCPPB 4357 / Et1/99).